Consider the following 256-residue polypeptide: Protein TV0584 (256 aa).

It belongs to the CinA family.

This Thermoplasma volcanium (strain ATCC 51530 / DSM 4299 / JCM 9571 / NBRC 15438 / GSS1) protein is Protein TV0584.